We begin with the raw amino-acid sequence, 213 residues long: MKIGIIGASGKAGNEILKEAKKRGHEVTAIVRNASKVQEQDVAILEKDVFELTAEDIKPFDAVVNAFGAAPGQEHLHVEAGRALISILKDAKHTRLLVVGGAGSLFVDEAKTTRLMDTPEFPKEYLPTASNQGENLKDLQQTDSISWTFLSPAAFFDPAGKRTGSYQKGKDNVIVNAKGDSYISYADYAIAVLDELEHPEHKNERFTVVSEAE.

This is an uncharacterized protein from Bacillus subtilis (strain 168).